The primary structure comprises 335 residues: Biotin synthase (335 aa).

The interval 1 to 20 (MVSVGTQSHSGRDQAEQNPS) is disordered. Positions 59–284 (GHLQKSSLLS…MMPQSMVRLS (226 aa)) constitute a Radical SAM core domain. Cys74, Cys78, and Cys81 together coordinate [4Fe-4S] cluster. 4 residues coordinate [2Fe-2S] cluster: Cys118, Cys150, Cys210, and Arg282.

It belongs to the radical SAM superfamily. Biotin synthase family. As to quaternary structure, homodimer. [4Fe-4S] cluster serves as cofactor. It depends on [2Fe-2S] cluster as a cofactor.

The enzyme catalyses (4R,5S)-dethiobiotin + (sulfur carrier)-SH + 2 reduced [2Fe-2S]-[ferredoxin] + 2 S-adenosyl-L-methionine = (sulfur carrier)-H + biotin + 2 5'-deoxyadenosine + 2 L-methionine + 2 oxidized [2Fe-2S]-[ferredoxin]. Its pathway is cofactor biosynthesis; biotin biosynthesis; biotin from 7,8-diaminononanoate: step 2/2. Its function is as follows. Catalyzes the conversion of dethiobiotin (DTB) to biotin by the insertion of a sulfur atom into dethiobiotin via a radical-based mechanism. The sequence is that of Biotin synthase from Zymomonas mobilis subsp. mobilis (strain ATCC 31821 / ZM4 / CP4).